Reading from the N-terminus, the 131-residue chain is Large ribosomal subunit protein bL17 (131 aa).

Belongs to the bacterial ribosomal protein bL17 family. As to quaternary structure, part of the 50S ribosomal subunit. Contacts protein L32.

This chain is Large ribosomal subunit protein bL17, found in Burkholderia mallei (strain NCTC 10229).